The following is a 356-amino-acid chain: Carminomycin 4-O-methyltransferase DauK (356 aa).

An S-adenosyl-L-methionine-binding site is contributed by R153. D163 serves as a coordination point for substrate. S-adenosyl-L-methionine is bound by residues G187, E210, 237-238 (DF), and S252. 2 residues coordinate substrate: N257 and R303.

Belongs to the class I-like SAM-binding methyltransferase superfamily. Cation-independent O-methyltransferase family. Homodimer and homotetramer in equilibrium.

It carries out the reaction carminomycin + S-adenosyl-L-methionine = daunorubicin + S-adenosyl-L-homocysteine + H(+). It participates in antibiotic biosynthesis; daunorubicin biosynthesis. Its pathway is antibiotic biosynthesis; carminomycin biosynthesis. Strongly inhibited by S-adenosyl-L-homocysteine and weakly by adenine and methionine. Functionally, involved in the biosynthesis of the anthracyclines carminomycin and daunorubicin (daunomycin) which are aromatic polyketide antibiotics that exhibit high cytotoxicity and are widely applied in the chemotherapy of a variety of cancers. In vivo, catalyzes the transfer of a methyl group from S-adenosyl-L-methionine to the 4-O-position of carminomycin to form daunorubicin. In vitro, it also methylates the anthracyclines rhodomycin D (10-carbomethoxy-13-deoxycarminomycin), 10-carboxy-13-deoxycarminomycin, 13-deoxy-carminomycin and 13-dihydrocarminomycin at the 4-hydroxyl position. This chain is Carminomycin 4-O-methyltransferase DauK (dauK), found in Streptomyces sp. (strain C5).